The following is an 81-amino-acid chain: Cytotoxin 1a (81 aa).

Residues 1–21 (MKTLLLTLVVVTIVCLDLGYT) form the signal peptide. Disulfide bonds link Cys24/Cys42, Cys35/Cys59, Cys63/Cys74, and Cys75/Cys80.

This sequence belongs to the three-finger toxin family. Short-chain subfamily. Type IA cytotoxin sub-subfamily. In terms of assembly, monomer in solution; Homodimer and oligomer in the presence of negatively charged lipids forming a pore with a size ranging between 20 and 30 Angstroms. As to expression, expressed by the venom gland.

It is found in the secreted. The protein resides in the target cell membrane. Functionally, shows cytolytic activity on many different cells by forming pore in lipid membranes. In vivo, increases heart rate or kills the animal by cardiac arrest. In addition, it binds to heparin with high affinity, interacts with Kv channel-interacting protein 1 (KCNIP1) in a calcium-independent manner, and binds to integrin alpha-V/beta-3 (ITGAV/ITGB3) with moderate affinity. In Naja atra (Chinese cobra), this protein is Cytotoxin 1a.